The primary structure comprises 294 residues: Proline iminopeptidase (294 aa).

In terms of domain architecture, AB hydrolase-1 spans 27-277 (PPLVLLHGGP…GCGHMSFVEK (251 aa)). The active-site Nucleophile is Ser105. The active site involves Asp244. His271 (proton donor) is an active-site residue.

This sequence belongs to the peptidase S33 family.

The protein localises to the cell envelope. It carries out the reaction Release of N-terminal proline from a peptide.. In terms of biological role, releases the N-terminal proline from various substrates. In Lactobacillus helveticus (strain DPC 4571), this protein is Proline iminopeptidase.